The sequence spans 269 residues: 5'-nucleotidase SurE (269 aa).

A divalent metal cation is bound by residues D11, D12, S43, and N101.

This sequence belongs to the SurE nucleotidase family. A divalent metal cation serves as cofactor.

It is found in the cytoplasm. It catalyses the reaction a ribonucleoside 5'-phosphate + H2O = a ribonucleoside + phosphate. Its function is as follows. Nucleotidase that shows phosphatase activity on nucleoside 5'-monophosphates. The chain is 5'-nucleotidase SurE from Prochlorococcus marinus (strain MIT 9211).